Here is a 267-residue protein sequence, read N- to C-terminus: Small ribosomal subunit protein uS2 (267 aa).

The disordered stretch occupies residues 1 to 72; it reads MSGNEKEGLD…QLDEDVMPDE (72 aa). Over residues 10–72 the composition is skewed to acidic residues; it reads DASDSDFDPS…QLDEDVMPDE (63 aa).

Belongs to the universal ribosomal protein uS2 family. Post-translationally, the N-terminus is blocked.

The polypeptide is Small ribosomal subunit protein uS2 (rps2) (Haloarcula marismortui (strain ATCC 43049 / DSM 3752 / JCM 8966 / VKM B-1809) (Halobacterium marismortui)).